A 195-amino-acid polypeptide reads, in one-letter code: MKTLYLASGSPRRRELVELLDFKFEILSPQVKEQRQEGETPRQYVSRLAKDKSLAGVAIAPEDFLVLGADTVVVLNGKVLEKPRSEQHAVAMLSALSGQSHQVITAIAISDSQRTLSDIVITDVTFRQLSTQEILDYVATGEPMDKAGAYGIQGKAGCFVKTLNGSYHSVVGLPLVETHELITKFFALVDGKGNS.

The Proton acceptor role is filled by Asp-70.

This sequence belongs to the Maf family. YhdE subfamily. The cofactor is a divalent metal cation.

The protein resides in the cytoplasm. The enzyme catalyses dTTP + H2O = dTMP + diphosphate + H(+). It catalyses the reaction UTP + H2O = UMP + diphosphate + H(+). In terms of biological role, nucleoside triphosphate pyrophosphatase that hydrolyzes dTTP and UTP. May have a dual role in cell division arrest and in preventing the incorporation of modified nucleotides into cellular nucleic acids. This is dTTP/UTP pyrophosphatase from Photorhabdus laumondii subsp. laumondii (strain DSM 15139 / CIP 105565 / TT01) (Photorhabdus luminescens subsp. laumondii).